The chain runs to 122 residues: uncharacterized protein (122 aa).

The protein localises to the mitochondrion. This is an uncharacterized protein from Arabidopsis thaliana (Mouse-ear cress).